The primary structure comprises 138 residues: Large ribosomal subunit protein uL14 (138 aa).

The protein belongs to the universal ribosomal protein uL14 family. As to quaternary structure, part of the 50S ribosomal subunit. Forms a cluster with proteins L3 and L24e, part of which may contact the 16S rRNA in 2 intersubunit bridges.

In terms of biological role, binds to 23S rRNA. Forms part of two intersubunit bridges in the 70S ribosome. The sequence is that of Large ribosomal subunit protein uL14 from Metallosphaera sedula (strain ATCC 51363 / DSM 5348 / JCM 9185 / NBRC 15509 / TH2).